We begin with the raw amino-acid sequence, 378 residues long: Deoxyguanosinetriphosphate triphosphohydrolase-like protein (378 aa).

The interval 1 to 28 (MLAPFACQPGESRGRQKPESMSTFRSPF) is disordered. In terms of domain architecture, HD spans 62-198 (RLTHSIEVAQ…AAIADDVAYS (137 aa)).

Belongs to the dGTPase family. Type 2 subfamily.

This chain is Deoxyguanosinetriphosphate triphosphohydrolase-like protein, found in Cereibacter sphaeroides (strain ATCC 17029 / ATH 2.4.9) (Rhodobacter sphaeroides).